Reading from the N-terminus, the 165-residue chain is Large ribosomal subunit protein bL17 (165 aa).

A compositionally biased stretch (basic and acidic residues) spans 138–158 (QEKREAQEKAREEKRTARKSD). The disordered stretch occupies residues 138-165 (QEKREAQEKAREEKRTARKSDSVPARKK).

It belongs to the bacterial ribosomal protein bL17 family. In terms of assembly, part of the 50S ribosomal subunit. Contacts protein L32.

This chain is Large ribosomal subunit protein bL17, found in Leptospira borgpetersenii serovar Hardjo-bovis (strain JB197).